The following is a 573-amino-acid chain: Sulfate adenylyltransferase (573 aa).

The segment at 1-169 (MANSPHGGVL…IEAVNKLNHY (169 aa)) is N-terminal. Positions 170 to 394 (DYVALRYTPA…LRESSPPRHT (225 aa)) are catalytic. Gln197 lines the sulfate pocket. Residues 197-200 (QTRN) and 291-294 (GRDH) each bind ATP. Residues Thr198, Arg199, and Asn200 contribute to the active site. A sulfate-binding site is contributed by Arg199. Ala295 contributes to the sulfate binding site. Val333 is an ATP binding site. Positions 395-573 (QGFTVFLTGY…LETEGFFDRA (179 aa)) are allosteric regulation domain; adenylyl-sulfate kinase-like. Residues 434 to 437 (DTVR), Arg451, 477 to 478 (IA), and Arg515 each bind 3'-phosphoadenylyl sulfate.

The protein in the N-terminal section; belongs to the sulfate adenylyltransferase family. It in the C-terminal section; belongs to the APS kinase family. As to quaternary structure, homohexamer. Dimer of trimers.

The protein localises to the cytoplasm. The enzyme catalyses sulfate + ATP + H(+) = adenosine 5'-phosphosulfate + diphosphate. Its pathway is sulfur metabolism; hydrogen sulfide biosynthesis; sulfite from sulfate: step 1/3. With respect to regulation, allosterically inhibited by 3'-phosphoadenosine 5'-phosphosulfate (PAPS). Functionally, catalyzes the first intracellular reaction of sulfate assimilation, forming adenosine-5'-phosphosulfate (APS) from inorganic sulfate and ATP. Plays an important role in sulfate activation as a component of the biosynthesis pathway of sulfur-containing amino acids. The chain is Sulfate adenylyltransferase from Aspergillus oryzae (strain ATCC 42149 / RIB 40) (Yellow koji mold).